The following is a 450-amino-acid chain: Sulfite exporter TauE/SafE family protein 1 (450 aa).

The next 12 membrane-spanning stretches (helical) occupy residues 5 to 25, 48 to 68, 70 to 90, 97 to 117, 130 to 150, 153 to 173, 223 to 243, 261 to 281, 316 to 336, 340 to 360, 378 to 398, and 408 to 428; these read LVPL…SALA, TIEV…AASI, SAGG…IAGL, SFSA…NLFL, FDLA…GVIC, MFPN…STMK, FPWM…SINL, ALYW…TLCI, VMAL…GMLI, LLQI…MVLF, GTAA…LMVV, and ASII…LMTT.

It belongs to the 4-toluene sulfonate uptake permease (TSUP) (TC 2.A.102) family.

The protein localises to the membrane. This chain is Sulfite exporter TauE/SafE family protein 1, found in Arabidopsis thaliana (Mouse-ear cress).